A 159-amino-acid polypeptide reads, in one-letter code: Urease accessory protein UreE (159 aa).

The tract at residues 140-159 is disordered; it reads GAYHGTGHHHHGHGHDPHHG.

It belongs to the UreE family.

The protein localises to the cytoplasm. Functionally, involved in urease metallocenter assembly. Binds nickel. Probably functions as a nickel donor during metallocenter assembly. This Sinorhizobium fredii (strain NBRC 101917 / NGR234) protein is Urease accessory protein UreE.